The sequence spans 132 residues: Probable prefoldin subunit 4 (132 aa).

This sequence belongs to the prefoldin subunit beta family. As to quaternary structure, heterohexamer of two PFD-alpha type and four PFD-beta type subunits.

In terms of biological role, binds specifically to cytosolic chaperonin (c-CPN) and transfers target proteins to it. Binds to nascent polypeptide chain and promotes folding in an environment in which there are many competing pathways for nonnative proteins. This chain is Probable prefoldin subunit 4 (pfdn4), found in Dictyostelium discoideum (Social amoeba).